The sequence spans 256 residues: Ribonuclease HII (256 aa).

Residues 67–255 (QLVGGVDEVG…VSEMVGLKKA (189 aa)) enclose the RNase H type-2 domain. 3 residues coordinate a divalent metal cation: Asp-73, Glu-74, and Asp-165.

Belongs to the RNase HII family. The cofactor is Mn(2+). Requires Mg(2+) as cofactor.

The protein localises to the cytoplasm. The enzyme catalyses Endonucleolytic cleavage to 5'-phosphomonoester.. Its function is as follows. Endonuclease that specifically degrades the RNA of RNA-DNA hybrids. In Lactobacillus delbrueckii subsp. bulgaricus (strain ATCC 11842 / DSM 20081 / BCRC 10696 / JCM 1002 / NBRC 13953 / NCIMB 11778 / NCTC 12712 / WDCM 00102 / Lb 14), this protein is Ribonuclease HII.